The following is a 236-amino-acid chain: Syntaxin-8 (236 aa).

At 1-215 (MAPDPWFSTY…LVDRKSASCG (215 aa)) the chain is on the cytoplasmic side. Residues 42–65 (LTIRTLLKNLKVKIDLLKDLLLRA) are a coiled coil. Phosphoserine occurs at positions 102 and 160. Positions 145–207 (QKIIQEQDAG…RTEARRVTLV (63 aa)) constitute a t-SNARE coiled-coil homology domain. The chain crosses the membrane as a helical; Anchor for type IV membrane protein span at residues 216–232 (MIMVILLLLVAIVVVAV). The Vesicular segment spans residues 233–236 (WPTN).

The protein belongs to the syntaxin family. Part of the SNARE core complex containing STX7, VAMP8 and VTI1B. Interacts with VAMP8. Forms a SNARE complex with STX7, VTI1B and VAMP8 which functions in the homotypic fusion of late endosomes. Component of the SNARE complex composed of STX7, STX8, VAMP7 and VTI1B that is required for heterotypic fusion of late endosomes with lysosomes. Interacts with HECTD3. Interacts with TPC1. Ubiquitinated by HECTD3. In terms of tissue distribution, widely expressed in all tissues examined.

It localises to the membrane. Vesicle trafficking protein that functions in the early secretory pathway, possibly by mediating retrograde transport from cis-Golgi membranes to the ER. This chain is Syntaxin-8 (Stx8), found in Rattus norvegicus (Rat).